The sequence spans 89 residues: MALDVQEKAQIVADYQQAVGDTGSPEVQVALLTHNINKLQGHFKANGKDHHSRRGLIRMVNQRRKLLDYLKGKDLGRYQTLIGRLGLRR.

The protein belongs to the universal ribosomal protein uS15 family. Part of the 30S ribosomal subunit. Forms a bridge to the 50S subunit in the 70S ribosome, contacting the 23S rRNA.

One of the primary rRNA binding proteins, it binds directly to 16S rRNA where it helps nucleate assembly of the platform of the 30S subunit by binding and bridging several RNA helices of the 16S rRNA. Functionally, forms an intersubunit bridge (bridge B4) with the 23S rRNA of the 50S subunit in the ribosome. The protein is Small ribosomal subunit protein uS15 of Pseudomonas fluorescens (strain SBW25).